The chain runs to 37 residues: Large ribosomal subunit protein bL36 (37 aa).

This sequence belongs to the bacterial ribosomal protein bL36 family.

The protein is Large ribosomal subunit protein bL36 of Mycoplasma genitalium (strain ATCC 33530 / DSM 19775 / NCTC 10195 / G37) (Mycoplasmoides genitalium).